Here is a 687-residue protein sequence, read N- to C-terminus: SLCO1B3-SLCO1B7 readthrough transcript protein (687 aa).

Residues 1 to 29 (MDQHQHLNKTAESASSEKKKTRRCNGFKM) lie on the Cytoplasmic side of the membrane. The helical transmembrane segment at 30-50 (FLAALSFSYIAKALGGIIMKI) threads the bilayer. Residues 51 to 63 (SITQIERRFDISS) lie on the Extracellular side of the membrane. The helical transmembrane segment at 64 to 84 (SLAGLIDGSFEIGNLLVIVFV) threads the bilayer. The Cytoplasmic segment spans residues 85-96 (SYFGSKLHRPKL). Residues 97–117 (IGIGCLLMGTGSILTSLPHFF) form a helical membrane-spanning segment. The Extracellular portion of the chain corresponds to 118 to 170 (MGYYRYSKETNIDPSENSTSNLPNCLINQMLSLNRTPSEIIERGCVKESGSHM). N-linked (GlcNAc...) asparagine glycans are attached at residues asparagine 134 and asparagine 151. The helical transmembrane segment at 171-191 (WIYVFMGNMLRGIGETPIVPL) threads the bilayer. At 192–206 (GISYIDDFAKEGHSS) the chain is on the cytoplasmic side. Residues 207 to 227 (LYLGTVNVMGMTGLVFAFMLG) traverse the membrane as a helical segment. Residues 228-258 (SLFAKMYVDIGYVDLSTIRITPKDSRWVGAW) are Extracellular-facing. The helical transmembrane segment at 259–279 (WLGFLVSGIVSIISSIPFFFL) threads the bilayer. The Cytoplasmic portion of the chain corresponds to 280–339 (PLNPNKPQKERKVSLFLHVLKTNDKRNQIANLTNRRKYITKNVTGFFQSLKSILTNPLYV). The helical transmembrane segment at 340 to 360 (IFVIFTLLHMSSYIASLTYII) threads the bilayer. Residues 361–376 (KMVEQQYGWSASKTNF) are Extracellular-facing. Residues 377–397 (LLGVLALPAVAIGMFSGGYII) traverse the membrane as a helical segment. Residues 398 to 409 (KKFKLSLVGLAK) are Cytoplasmic-facing. The chain crosses the membrane as a helical span at residues 410-430 (LAFCSATVHLLSQVLYFFLIC). Residues 431-539 (ESKSVAGLTL…CTRKSYVYFV (109 aa)) lie on the Extracellular side of the membrane. The 56-residue stretch at 453-508 (DVPLSYCNSECNCDESQWEPVCGNNGITYLSPCLAGCKSSSGNKEPIVFYNCSCVE) folds into the Kazal-like domain. 3 disulfide bridges follow: cysteine 459-cysteine 489, cysteine 465-cysteine 485, and cysteine 474-cysteine 506. 2 N-linked (GlcNAc...) asparagine glycosylation sites follow: asparagine 503 and asparagine 516. A helical membrane pass occupies residues 540–560 (IQVLDAFLCAVGLTSYSVLVI). Residues 561-568 (RIVQPELK) lie on the Cytoplasmic side of the membrane. The chain crosses the membrane as a helical span at residues 569–589 (ALAIGFHSMIMRSLGGILVPI). At 590 to 624 (YFGALIDTTCMKWSTNSCGARGACRIYNSTYLGRA) the chain is on the extracellular side. N-linked (GlcNAc...) asparagine glycosylation is present at asparagine 617. Residues 625–645 (FFGLKVALIFPVLVLLTVFIF) traverse the membrane as a helical segment. At 646–687 (VVRKKSHGKDTKVLENERQVMDEANLEFLNDSEHFVPSAEEQ) the chain is on the cytoplasmic side.

It belongs to the organo anion transporter (TC 2.A.60) family. In terms of tissue distribution, expressed in the perivenular areas (centrilobular) of the liver (at protein level).

The protein resides in the smooth endoplasmic reticulum membrane. It is found in the cell membrane. The protein localises to the endoplasmic reticulum membrane. The enzyme catalyses 17beta-estradiol 17-O-(beta-D-glucuronate)(out) = 17beta-estradiol 17-O-(beta-D-glucuronate)(in). It carries out the reaction dehydroepiandrosterone 3-sulfate(out) = dehydroepiandrosterone 3-sulfate(in). It catalyses the reaction taurocholate(out) = taurocholate(in). The catalysed reaction is lithocholate(out) = lithocholate(in). Transport activity is induced by farnesoid X receptor (FXR) agonists such as chenodeoxycholate. Mediates the Na(+)-independent uptake of organic anions. Transports the conjugated steroids 17-beta-glucuronosyl estradiol (17beta-estradiol 17-O-(beta-D-glucuronate) or E2G) and dehydroepiandrosterone 3-sulfate (DHEAS) at the smooth endoplasmic reticulum membrane (SER), granting access to metabolizing enzymes. Contributes to the metabolism of bile acids such as taurocholate (cholyltaurine) and lithocholate, by functioning as a doorway between SER and cytosol, thereby decreasing their circulating levels and protecting the organism from their detergent properties. Regulates access or exit of drugs to the SER lumen. The polypeptide is SLCO1B3-SLCO1B7 readthrough transcript protein (Homo sapiens (Human)).